The sequence spans 160 residues: Phosphopantetheine adenylyltransferase (160 aa).

Ser-9 contacts substrate. ATP is bound by residues 9-10 and His-17; that span reads SF. The substrate site is built by Lys-41, Leu-73, and Lys-87. ATP-binding positions include 88-90, Glu-98, and 123-129; these read GLR and YGYLSSS.

It belongs to the bacterial CoaD family. Homohexamer. Mg(2+) serves as cofactor.

The protein resides in the cytoplasm. The catalysed reaction is (R)-4'-phosphopantetheine + ATP + H(+) = 3'-dephospho-CoA + diphosphate. It participates in cofactor biosynthesis; coenzyme A biosynthesis; CoA from (R)-pantothenate: step 4/5. Its function is as follows. Reversibly transfers an adenylyl group from ATP to 4'-phosphopantetheine, yielding dephospho-CoA (dPCoA) and pyrophosphate. In Caldanaerobacter subterraneus subsp. tengcongensis (strain DSM 15242 / JCM 11007 / NBRC 100824 / MB4) (Thermoanaerobacter tengcongensis), this protein is Phosphopantetheine adenylyltransferase.